The primary structure comprises 123 residues: 13 kDa major membrane protein (123 aa).

The protein resides in the cell membrane. The polypeptide is 13 kDa major membrane protein (Francisella tularensis subsp. holarctica (strain LVS)).